A 372-amino-acid polypeptide reads, in one-letter code: GTPase Obg (372 aa).

The 159-residue stretch at 1–159 (MKFIDEARIE…RMLKLELKVL (159 aa)) folds into the Obg domain. A disordered region spans residues 128 to 147 (LHFKSSTNRAPRQKTDGKPG). One can recognise an OBG-type G domain in the interval 160 to 334 (ADVGLLGMPN…LVYAIHDYLV (175 aa)). Residues 166 to 173 (GMPNAGKS), 191 to 195 (FTTLA), 213 to 216 (DIPG), 284 to 287 (NKLD), and 315 to 317 (SAL) contribute to the GTP site. Serine 173 and threonine 193 together coordinate Mg(2+).

It belongs to the TRAFAC class OBG-HflX-like GTPase superfamily. OBG GTPase family. As to quaternary structure, monomer. It depends on Mg(2+) as a cofactor.

The protein localises to the cytoplasm. In terms of biological role, an essential GTPase which binds GTP, GDP and possibly (p)ppGpp with moderate affinity, with high nucleotide exchange rates and a fairly low GTP hydrolysis rate. Plays a role in control of the cell cycle, stress response, ribosome biogenesis and in those bacteria that undergo differentiation, in morphogenesis control. This chain is GTPase Obg, found in Burkholderia pseudomallei (strain 668).